A 491-amino-acid chain; its full sequence is Trypanothione reductase (491 aa).

An FAD-binding site is contributed by 35-52; that stretch reads DVQATHGPPALVALGGTC. Cysteine 52 and cysteine 57 are disulfide-bonded. Histidine 461 (proton acceptor) is an active-site residue.

This sequence belongs to the class-I pyridine nucleotide-disulfide oxidoreductase family. Homodimer. FAD is required as a cofactor.

The protein resides in the cytoplasm. It carries out the reaction trypanothione + NADP(+) = trypanothione disulfide + NADPH + H(+). Trypanothione is the parasite analog of glutathione; this enzyme is the equivalent of glutathione reductase. This chain is Trypanothione reductase (TPR), found in Leishmania donovani.